Here is a 736-residue protein sequence, read N- to C-terminus: Glycogen [starch] synthase, muscle (736 aa).

Position 8 is a phosphoserine; by AMPK and PKA (S8). Residue S11 is modified to Phosphoserine. Residue K39 coordinates UDP. UDP-alpha-D-glucose is bound by residues H205 and R211. Positions 291, 292, 294, 297, and 301 each coordinate alpha-D-glucose 6-phosphate. A UDP-binding site is contributed by R331. Residue R331 participates in UDP-alpha-D-glucose binding. Phosphoserine is present on S412. Residue H501 coordinates alpha-D-glucose 6-phosphate. UDP-alpha-D-glucose is bound by residues E510, W512, and G513. T515 provides a ligand contact to UDP. Positions 582 and 586 each coordinate alpha-D-glucose 6-phosphate. Residues 631–736 are disordered; that stretch reads TQGYRYPRPA…PASSLGEERN (106 aa). Residue S641 is modified to Phosphoserine; by DYRK2, GSK3-alpha, GSK3-beta and PASK. Phosphoserine; by GSK3-alpha and GSK3-beta occurs at positions 645 and 649. A Phosphoserine modification is found at S652. Position 653 is a phosphoserine; by GSK3-alpha and GSK3-beta (S653). S657 carries the phosphoserine; by CK2 modification. A compositionally biased stretch (acidic residues) spans 658 to 681; that stretch reads EDEEEPRDLPPDEDDERYDEDEEA. Over residues 682–695 the composition is skewed to basic and acidic residues; sequence AKDRRNIRAPEWPR. Residue S698 is modified to Phosphoserine. The residue at position 700 (T700) is a Phosphothreonine. S709 carries the phosphoserine modification. Positions 714-727 are enriched in low complexity; that stretch reads PSSSVSTPSEPLSP. T720 carries the post-translational modification Phosphothreonine. 2 positions are modified to phosphoserine: S726 and S730.

This sequence belongs to the glycosyltransferase 3 family. Part of the GYS1-GYG1 complex, a heterooctamer composed of a tetramer of GYS1 and 2 dimers of GYG1, where each GYS1 protomer binds to one GYG1 subunit (via GYG1 C-terminus); the GYS1 tetramer may dissociate from GYG1 dimers to continue glycogen polymerization on its own. Phosphorylation at Ser-8 by AMPK inactivates the enzyme activity. Primed phosphorylation at Ser-657 (site 5) by CSNK2A1 and CSNK2A2 is required for inhibitory phosphorylation at Ser-641 (site 3a), Ser-645 (site 3b), Ser-649 (site 3c) and Ser-653 (site 4) by GSK3A an GSK3B. Phosphorylated at Ser-641 by PASK, leading to inactivation; phosphorylation by PASK is inhibited by glycogen. Phosphorylated at Ser-641 by DYRK2, leading to inactivation. Dephosphorylation at Ser-641 and Ser-645 by PP1 activates the enzyme.

The catalysed reaction is [(1-&gt;4)-alpha-D-glucosyl](n) + UDP-alpha-D-glucose = [(1-&gt;4)-alpha-D-glucosyl](n+1) + UDP + H(+). The protein operates within glycan biosynthesis; glycogen biosynthesis. With respect to regulation, allosteric activation by glucose-6-phosphate. Phosphorylation reduces the activity towards UDP-glucose. When in the non-phosphorylated state, glycogen synthase does not require glucose-6-phosphate as an allosteric activator; when phosphorylated it does. Glycogen synthase participates in the glycogen biosynthetic process along with glycogenin and glycogen branching enzyme. Extends the primer composed of a few glucose units formed by glycogenin by adding new glucose units to it. In this context, glycogen synthase transfers the glycosyl residue from UDP-Glc to the non-reducing end of alpha-1,4-glucan. The sequence is that of Glycogen [starch] synthase, muscle (GYS1) from Bos taurus (Bovine).